The primary structure comprises 33 residues: Omega-conotoxin-like Vn2 (33 aa).

Disulfide bonds link cysteine 3-cysteine 20, cysteine 10-cysteine 24, and cysteine 19-cysteine 28. Position 33 is a proline amide (proline 33).

In terms of tissue distribution, expressed by the venom duct.

It localises to the secreted. Its function is as follows. Omega-conotoxins act at presynaptic membranes, they bind and block voltage-gated calcium channels (Cav). Has strong insecticidal properties at a dose of only 100 pmol/g of body weight (when injected into the haemocoel of the wax moth G.mellonella larvae). Provoques tremor and uncontrolled movements in insect larvae, that are typical symptoms caused by neurotoxins. On fish G.niger, intraperitoneal injection of the toxin causes full extension of the fins, change in posture, breathing difficulties (at 30 and 100 pmol/g body weight) and death (at 100 pmol/g body weight). The sequence is that of Omega-conotoxin-like Vn2 from Conus ventricosus (Mediterranean cone).